A 497-amino-acid chain; its full sequence is Arginine/ornithine antiporter ArcD2 (497 aa).

The next 13 helical transmembrane spans lie at 8–28, 41–61, 88–108, 127–147, 160–180, 220–240, 255–275, 297–317, 354–374, 378–398, 406–426, 429–449, and 462–482; these read GISLFALLAIIISGAIGGGVF, GGVVISWLFIGFGILMLVLSF, FLSGWGYWISAWTGTIGFAVL, SLTILSVIIVSIISWILMLLV, IVMIAKLIPLVVFSITGIILF, IKGSLMVMVWVFVGIEGATMM, VIGLAVLLVIYVLLSLLPYGY, VGGWGGSLMAVGLMISLLGAW, LLITQLMIQIFIIITYFVANA, FIYMATAVIMICYALVGAYLF, SVKNILIGFFTFAFQALALYL, WQYVWLAMILYTIGFLLFIGA, and WLGMLVVTVLGVLAIVVLICG.

Belongs to the amino acid-polyamine-organocation (APC) superfamily. Basic amino acid/polyamine antiporter (APA) (TC 2.A.3.2) family.

Its subcellular location is the cell membrane. It carries out the reaction L-ornithine(in) + L-arginine(out) = L-ornithine(out) + L-arginine(in). In terms of biological role, catalyzes electroneutral exchange between L-arginine and L-ornithine. Can also efficiently translocate L-alanine. May function in vivo as a L-arginine/L-alanine exchanger in a pathway together with the arcT gene, which is found adjacent to the arcD2 gene in the ADI gene cluster. The polypeptide is Arginine/ornithine antiporter ArcD2 (Lactococcus lactis subsp. cremoris (strain MG1363)).